The sequence spans 284 residues: Heat stress transcription factor B-1 (284 aa).

The DNA-binding element occupies 12–106; the sequence is PAPFLSKTYQ…LLTDIRRRKS (95 aa). The disordered stretch occupies residues 118–151; sequence VGSPSESNSGGGDDHGSSSTSSPGSSKNPGSVEN. A compositionally biased stretch (low complexity) spans 134-148; sequence SSSTSSPGSSKNPGS. The segment at 147–192 is hydrophobic repeat HR-A/B; sequence GSVENMVADLSGENEKLKRENNNLSSELAAAKKQRDELVTFLTGHL. Residues 247–252 carry the Nuclear localization signal motif; the sequence is RKKRDR.

Belongs to the HSF family. Class B subfamily. Homotrimer. In terms of processing, exhibits temperature-dependent phosphorylation.

It is found in the nucleus. In terms of biological role, transcriptional regulator that specifically binds DNA sequence 5'-AGAAnnTTCT-3' known as heat shock promoter elements (HSE). This is Heat stress transcription factor B-1 (HSFB1) from Arabidopsis thaliana (Mouse-ear cress).